Reading from the N-terminus, the 502-residue chain is ATP synthase subunit alpha, sodium ion specific (502 aa).

169 to 176 provides a ligand contact to ATP; that stretch reads GDRQTGKT.

This sequence belongs to the ATPase alpha/beta chains family. As to quaternary structure, F-type ATPases have 2 components, CF(1) - the catalytic core - and CF(0) - the membrane proton channel. CF(1) has five subunits: alpha(3), beta(3), gamma(1), delta(1), epsilon(1). CF(0) has three main subunits: a, b and c.

The protein localises to the cell membrane. The enzyme catalyses 4 Na(+)(in) + ATP + H2O = 4 Na(+)(out) + ADP + phosphate + H(+). Its activity is regulated as follows. Inhibited by nitrate. Its function is as follows. Produces ATP from ADP in the presence of a sodium ion gradient across the membrane. The alpha chain is a regulatory subunit. This is ATP synthase subunit alpha, sodium ion specific from Acetobacterium woodii (strain ATCC 29683 / DSM 1030 / JCM 2381 / KCTC 1655 / WB1).